The chain runs to 92 residues: Kinetoplastid membrane protein 11 (92 aa).

The protein belongs to the KMP-11 family. As to quaternary structure, monomer.

The protein localises to the cytoplasm. It is found in the cytoskeleton. Functionally, may be involved in the regulation of the cytoskeleton through interaction with the subpellicular microtubules. May be involved in parasite mobility and attachment to the surface of the host cell. Behaves as a strong immunogen during infection. The polypeptide is Kinetoplastid membrane protein 11 (KMP-11/1) (Trypanosoma brucei brucei).